A 366-amino-acid polypeptide reads, in one-letter code: MWPLSHRHLCLAFLLVCVLSAISFFLHVHQDSFRHGLGLSLLCPDRRLVTHPVAIFCLPGTPMSPNTSSPCPQHPASLSGTWTIYPDGRFGNQMGQYATLLALAQLNARQAFILPAMHAALAPVFRITLPVLAPEVDSHTPWRELRLHDWMSEEYADLEDPFLKLSGFPCSWTFFHHLREQIRSEFTLHDHLREEAQSVLRRLRLGRPWDRPRTFVGVHVRRGDYLQVMPQRWKGVVGNSAYLREAMDWFRARHEAPVFVVTSNGMEWCRENIDTSKGDVMFAGDGQEASPWKDFALLTQCNHTIMTIGTFGFWAAYLAGGDTVYLANFTLPDSEFLKIFKPEAAFLPEWVGINADLSPLWTLAEP.

The Cytoplasmic segment spans residues 1-8; that stretch reads MWPLSHRH. A helical; Signal-anchor for type II membrane protein membrane pass occupies residues 9-25; sequence LCLAFLLVCVLSAISFF. Residues 26–366 are Lumenal-facing; sequence LHVHQDSFRH…LSPLWTLAEP (341 aa). Asparagine 66, asparagine 302, and asparagine 328 each carry an N-linked (GlcNAc...) asparagine glycan.

Belongs to the glycosyltransferase 11 family.

The protein localises to the golgi apparatus. Its subcellular location is the golgi stack membrane. It catalyses the reaction a beta-D-galactosyl-(1-&gt;4)-N-acetyl-beta-D-glucosaminyl derivative + GDP-beta-L-fucose = an alpha-L-Fuc-(1-&gt;2)-beta-D-Gal-(1-&gt;4)-beta-D-GlcNAc derivative + GDP + H(+). The catalysed reaction is a ganglioside GA1 + GDP-beta-L-fucose = a ganglioside Fuc-GA1 + GDP + H(+). The enzyme catalyses a beta-D-Gal-(1-&gt;3)-beta-D-GlcNAc-(1-&gt;3)-beta-D-Gal-(1-&gt;4)-beta-D-Glc-(1&lt;-&gt;1')-Cer(d18:1(4E)) + GDP-beta-L-fucose = alpha-L-fucosyl-(1-&gt;2)- beta-D-galactosyl-(1-&gt;3)-N-acetyl-beta-D-glucosaminyl-(1-&gt;3)-beta-D-galactosyl-(1-&gt;4)-beta-D-glucosyl-(1&lt;-&gt;1')-N-acylsphing-4-enine + GDP + H(+). It carries out the reaction a neolactoside nLc4Cer(d18:1(4E)) + GDP-beta-L-fucose = a neolactoside IV(2)-alpha-Fuc-nLc4Cer(d18:1(4E)) + GDP + H(+). It catalyses the reaction a ganglioside GM1 + GDP-beta-L-fucose = a ganglioside Fuc-GM1 + GDP + H(+). The catalysed reaction is beta-D-galactosyl-(1-&gt;3)-N-acetyl-D-galactosamine + GDP-beta-L-fucose = alpha-L-fucosyl-(1-&gt;2)-beta-D-galactosyl-(1-&gt;3)-N-acetyl-D-galactosamine + GDP + H(+). The protein operates within protein modification; protein glycosylation. Its function is as follows. Catalyzes the transfer of L-fucose, from a guanosine diphosphate-beta-L-fucose, to the terminal galactose residue of glycoconjugates through an alpha(1,2) linkage leading to H antigen synthesis that is an intermediate substrate in the synthesis of ABO blood group antigens. H antigen is essential for maturation of the glomerular layer of the main olfactory bulb, in cell migration and early cell-cell contacts during tumor associated angiogenesis. Preferentially fucosylates soluble lactose and to a lesser extent fucosylates glycolipids gangliosides GA1 and GM1a. The protein is Galactoside alpha-(1,2)-fucosyltransferase 1 of Alouatta belzebul (Red-handed howler monkey).